The primary structure comprises 438 residues: GTPase Der (438 aa).

EngA-type G domains follow at residues 4-168 and 177-352; these read PLVT…KSEG and IKIA…DNYS. Residues 10-17, 57-61, 120-123, 183-190, 230-234, and 295-298 contribute to the GTP site; these read GRPNVGKS, DTGGI, NKID, GKPNVGKS, DTAGL, and NKWD. Positions 353 to 437 constitute a KH-like domain; it reads KRIATGVLND…GIKMIFKERK (85 aa).

This sequence belongs to the TRAFAC class TrmE-Era-EngA-EngB-Septin-like GTPase superfamily. EngA (Der) GTPase family. In terms of assembly, associates with the 50S ribosomal subunit.

GTPase that plays an essential role in the late steps of ribosome biogenesis. This is GTPase Der from Clostridium acetobutylicum (strain ATCC 824 / DSM 792 / JCM 1419 / IAM 19013 / LMG 5710 / NBRC 13948 / NRRL B-527 / VKM B-1787 / 2291 / W).